Here is a 117-residue protein sequence, read N- to C-terminus: ORF2 protein (117 aa).

The interval 43 to 104 (NLGRPPAPQP…AGDGGDGELA (62 aa)) is disordered. Positions 79-98 (GTGGDAAGGEAGGSRGAGDG) are enriched in gly residues.

This chain is ORF2 protein, found in Homo sapiens (Human).